The chain runs to 204 residues: Leucyl/phenylalanyl-tRNA--protein transferase (204 aa).

This sequence belongs to the L/F-transferase family.

It is found in the cytoplasm. The catalysed reaction is N-terminal L-lysyl-[protein] + L-leucyl-tRNA(Leu) = N-terminal L-leucyl-L-lysyl-[protein] + tRNA(Leu) + H(+). The enzyme catalyses N-terminal L-arginyl-[protein] + L-leucyl-tRNA(Leu) = N-terminal L-leucyl-L-arginyl-[protein] + tRNA(Leu) + H(+). It carries out the reaction L-phenylalanyl-tRNA(Phe) + an N-terminal L-alpha-aminoacyl-[protein] = an N-terminal L-phenylalanyl-L-alpha-aminoacyl-[protein] + tRNA(Phe). Its function is as follows. Functions in the N-end rule pathway of protein degradation where it conjugates Leu, Phe and, less efficiently, Met from aminoacyl-tRNAs to the N-termini of proteins containing an N-terminal arginine or lysine. This is Leucyl/phenylalanyl-tRNA--protein transferase from Rhizobium johnstonii (strain DSM 114642 / LMG 32736 / 3841) (Rhizobium leguminosarum bv. viciae).